Here is a 405-residue protein sequence, read N- to C-terminus: Phosphatidylinositol 5-phosphate 4-kinase type-2 alpha (405 aa).

Ala2 carries the post-translational modification N-acetylalanine. Thr3 carries the post-translational modification Phosphothreonine. Phosphoserine is present on Ser14. One can recognise a PIPK domain in the interval 33–405 (ASDPLLSVLM…RFLDFIGHIL (373 aa)). Residues 59 to 65 (VMLMPDD) are required for interaction with PIP5K1A. 2 positions are modified to N6-acetyllysine: Lys89 and Lys145. Positions 288-328 (QEEVECEENDGEEEGESDSTHPIGTPPDSPGNTLNSSPPLA) are disordered. Acidic residues predominate over residues 289 to 304 (EEVECEENDGEEEGES).

In terms of assembly, homodimer. Interacts with PIP4K2B; the interaction may regulate localization to the nucleus. Probably interacts with PIP5K1A; the interaction inhibits PIP5K1A kinase activity. Post-translationally, phosphorylated in tyrosines. Phosphorylation is induced by light and increases kinase activity. As to expression, detected in rod photoreceptor cells.

Its subcellular location is the cell membrane. It is found in the nucleus. The protein localises to the lysosome. The protein resides in the cytoplasm. It localises to the photoreceptor inner segment. Its subcellular location is the cell projection. It is found in the cilium. The protein localises to the photoreceptor outer segment. It catalyses the reaction a 1,2-diacyl-sn-glycero-3-phospho-(1D-myo-inositol-5-phosphate) + ATP = a 1,2-diacyl-sn-glycero-3-phospho-(1D-myo-inositol-4,5-bisphosphate) + ADP + H(+). It carries out the reaction 1,2-dihexadecanoyl-sn-glycero-3-phospho-(1D-myo-inositol-5-phosphate) + ATP = 1,2-dihexadecanoyl-sn-glycero-3-phospho-(1D-myo-inositol-4,5-bisphosphate) + ADP + H(+). The enzyme catalyses 1,2-dihexadecanoyl-sn-glycero-3-phospho-(1D-myo-inositol-5-phosphate) + GTP = 1,2-dihexadecanoyl-sn-glycero-3-phospho-(1D-myo-inositol-4,5-bisphosphate) + GDP + H(+). Its activity is regulated as follows. In rod outer segments, activated by light. In terms of biological role, catalyzes the phosphorylation of phosphatidylinositol 5-phosphate (PtdIns5P) on the fourth hydroxyl of the myo-inositol ring, to form phosphatidylinositol 4,5-bisphosphate (PtdIns(4,5)P2). Has both ATP- and GTP-dependent kinase activities. May exert its function by regulating the levels of PtdIns5P, which functions in the cytosol by increasing AKT activity and in the nucleus signals through ING2. May regulate the pool of cytosolic PtdIns5P in response to the activation of tyrosine phosphorylation. Required for lysosome-peroxisome membrane contacts and intracellular cholesterol transport through modulating peroxisomal PtdIns(4,5)P2 level. In collaboration with PIP4K2B, has a role in mediating autophagy in times of nutrient stress. Required for autophagosome-lysosome fusion and the regulation of cellular lipid metabolism. Negatively regulates insulin signaling through a catalytic-independent mechanism. PIP4Ks interact with PIP5Ks and suppress PIP5K-mediated PtdIns(4,5)P2 synthesis and insulin-dependent conversion to PtdIns(3,4,5)P3. May be involved in thrombopoiesis, and the terminal maturation of megakaryocytes and regulation of their size. The chain is Phosphatidylinositol 5-phosphate 4-kinase type-2 alpha from Mus musculus (Mouse).